A 430-amino-acid polypeptide reads, in one-letter code: Tol-Pal system protein TolB (430 aa).

Positions 1-21 (MKQALRVAFGFLILWASVLHA) are cleaved as a signal peptide.

It belongs to the TolB family. As to quaternary structure, the Tol-Pal system is composed of five core proteins: the inner membrane proteins TolA, TolQ and TolR, the periplasmic protein TolB and the outer membrane protein Pal. They form a network linking the inner and outer membranes and the peptidoglycan layer.

The protein localises to the periplasm. Functionally, part of the Tol-Pal system, which plays a role in outer membrane invagination during cell division and is important for maintaining outer membrane integrity. TolB occupies a key intermediary position in the Tol-Pal system because it communicates directly with both membrane-embedded components, Pal in the outer membrane and TolA in the inner membrane. This Shigella boydii serotype 4 (strain Sb227) protein is Tol-Pal system protein TolB.